The sequence spans 316 residues: Retinol dehydrogenase 11 (316 aa).

A helical; Signal-anchor for type II membrane protein membrane pass occupies residues 1–21 (MFGFLLLLSLPFILYLVTPKI). The Cytoplasmic segment spans residues 22-316 (RKMLSSGVCT…CDLLGLPVDW (295 aa)). 45-51 (GANTGIG) is an NADP(+) binding site. K109 carries the post-translational modification N6-acetyllysine. S174 contacts substrate. Y199 (proton acceptor) is an active-site residue.

Belongs to the short-chain dehydrogenases/reductases (SDR) family. Not glycosylated. In terms of tissue distribution, expressed at high level in liver and testis. Expressed at lower levels in smooth muscle, thymus, submaxillary gland and epididymis. In testis, expression is restricted to pachytene spermatocytes. Also expressed in four layers of the retina, including the outer segment of rods and cones.

It localises to the endoplasmic reticulum membrane. The enzyme catalyses all-trans-retinol + NADP(+) = all-trans-retinal + NADPH + H(+). It catalyses the reaction 11-cis-retinol + NADP(+) = 11-cis-retinal + NADPH + H(+). It carries out the reaction 9-cis-retinol + NADP(+) = 9-cis-retinal + NADPH + H(+). The catalysed reaction is 13-cis-retinol + NADP(+) = 13-cis-retinal + NADPH + H(+). The enzyme catalyses a medium-chain primary fatty alcohol + NADP(+) = a medium-chain fatty aldehyde + NADPH + H(+). It catalyses the reaction (2E,6Z)-nona-2,6-dien-1-ol + NADP(+) = (2E,6Z)-nona-2,6-dienal + NADPH + H(+). It carries out the reaction (E)-oct-2-en-1-ol + NADP(+) = (2E)-octenal + NADPH + H(+). The catalysed reaction is (E)-non-2-en-1-ol + NADP(+) = (E)-non-2-enal + NADPH + H(+). The enzyme catalyses heptan-1-ol + NADP(+) = heptanal + NADPH + H(+). It catalyses the reaction hexan-1-ol + NADP(+) = hexanal + NADPH + H(+). It carries out the reaction decan-1-ol + NADP(+) = decanal + NADPH + H(+). The catalysed reaction is nonan-1-ol + NADP(+) = nonanal + NADPH + H(+). The enzyme catalyses octan-1-ol + NADP(+) = octanal + NADPH + H(+). It catalyses the reaction (Z)-non-6-en-1-ol + NADP(+) = (Z)-non-6-enal + NADPH + H(+). It participates in cofactor metabolism; retinol metabolism. In terms of biological role, retinol dehydrogenase with a clear preference for NADP. Displays high activity towards 9-cis, 11-cis and all-trans-retinol, and to a lesser extent on 13-cis-retinol. Also exhibits reductive activity towards toxic lipid peroxidation products such as medium-chain aldehydes trans-2-nonenal, nonanal, and cis-6-nonenal. Has no dehydrogenase activity towards steroid. Seems to be required for homeostasis of retinol in liver and testis. The polypeptide is Retinol dehydrogenase 11 (Rdh11) (Mus musculus (Mouse)).